Consider the following 796-residue polypeptide: Vacuolar protein sorting-associated protein 35 (796 aa).

Ser-7 is modified (phosphoserine). Interaction with SNX3 stretches follow at residues 25–44 (VQSF…DALK) and 205–215 (DREKRERERQE). The tract at residues 438-796 (CYVLSNVLDY…EGPIYEGLIL (359 aa)) is interaction with SLC11A2. The tract at residues 500–693 (SEDPDQQYLI…DKNGEELHGG (194 aa)) is interaction with IGF2R cytoplasmic domain. Ser-783 carries the phosphoserine modification. Position 791 is a phosphotyrosine (Tyr-791).

Belongs to the VPS35 family. Component of the heterotrimeric retromer cargo-selective complex (CSC), also decribed as vacuolar protein sorting subcomplex (VPS), formed by VPS26 (VPS26A or VPS26B), VPS29 and VPS35. The CSC has a highly elongated structure with VPS26 and VPS29 binding independently at opposite distal ends of VPS35 as central platform. The CSC is believed to associate with variable sorting nexins to form functionally distinct retromer complex variants. The originally described retromer complex (also called SNX-BAR retromer) is a pentamer containing the CSC and a heterodimeric membrane-deforming subcomplex formed between SNX1 or SNX2 and SNX5 or SNX6 (also called SNX-BAR subcomplex); the respective CSC and SNX-BAR subcomplexes associate with low affinity. The CSC associates with SNX3 to form a SNX3-retromer complex. The CSC associates with SNX27, the WASH complex and the SNX-BAR subcomplex to form the SNX27-retromer complex. Interacts with VPS26A, VPS26B, VPS29, SNX1, SNX2, IGF2R, SNX3, GOLPH3, LRRK2, SLC11A2, WASHC2A, WASHC2C, FKBP15, WASHC1, RAB7A, SNX27, WASHC5, EHD1. Interacts with MAGEL2; leading to recruitment of the TRIM27:MAGEL2 E3 ubiquitin ligase complex retromer-containing endosomes. Interacts with SORCS2. In terms of assembly, (Microbial infection) Interacts with human papillomavirus 16 minor capsid protein L2 (via C-terminus); this interaction mediates the transport of the capsid from the early endosome to the Golgi apparatus. Ubiquitous. Highly expressed in heart, brain, placenta, skeletal muscle, spleen, thymus, testis, ovary, small intestine, kidney and colon.

It is found in the cytoplasm. The protein resides in the membrane. It localises to the endosome. The protein localises to the early endosome. Its subcellular location is the late endosome. In terms of biological role, acts as a component of the retromer cargo-selective complex (CSC). The CSC is believed to be the core functional component of retromer or respective retromer complex variants acting to prevent missorting of selected transmembrane cargo proteins into the lysosomal degradation pathway. The recruitment of the CSC to the endosomal membrane involves RAB7A and SNX3. The CSC seems to associate with the cytoplasmic domain of cargo proteins predominantly via VPS35; however, these interactions seem to be of low affinity and retromer SNX proteins may also contribute to cargo selectivity thus questioning the classical function of the CSC. The SNX-BAR retromer mediates retrograde transport of cargo proteins from endosomes to the trans-Golgi network (TGN) and is involved in endosome-to-plasma membrane transport for cargo protein recycling. The SNX3-retromer mediates the retrograde endosome-to-TGN transport of WLS distinct from the SNX-BAR retromer pathway. The SNX27-retromer is believed to be involved in endosome-to-plasma membrane trafficking and recycling of a broad spectrum of cargo proteins. The CSC seems to act as recruitment hub for other proteins, such as the WASH complex and TBC1D5. Required for retrograde transport of lysosomal enzyme receptor IGF2R and SLC11A2. Required to regulate transcytosis of the polymeric immunoglobulin receptor (pIgR-pIgA). Required for endosomal localization of WASHC2C. Mediates the association of the CSC with the WASH complex via WASHC2. Required for the endosomal localization of TBC1D5. Functionally, (Microbial infection) The heterotrimeric retromer cargo-selective complex (CSC) mediates the exit of human papillomavirus from the early endosome and the delivery to the Golgi apparatus. The polypeptide is Vacuolar protein sorting-associated protein 35 (Homo sapiens (Human)).